We begin with the raw amino-acid sequence, 187 residues long: Large ribosomal subunit protein bL17 (187 aa).

The interval 122–187 is disordered; sequence PKVRSSRTST…EADAAEKSDK (66 aa). Low complexity predominate over residues 127-144; the sequence is SRTSTATAPAAAAPAAEA. Acidic residues-rich tracts occupy residues 145–157 and 165–180; these read PAEE…EETD and TPAE…VEAD.

It belongs to the bacterial ribosomal protein bL17 family. In terms of assembly, part of the 50S ribosomal subunit. Contacts protein L32.

The protein is Large ribosomal subunit protein bL17 of Clavibacter michiganensis subsp. michiganensis (strain NCPPB 382).